The following is a 1103-amino-acid chain: Ataxin-2 homolog (1103 aa).

The span at 1 to 10 shows a compositional bias: basic residues; that stretch reads MSQSKDKKKF. The tract at residues 1–75 is disordered; it reads MSQSKDKKKF…QQQQQQQQPF (75 aa). Residues 11 to 28 show a composition bias toward gly residues; the sequence is VGGGGGGGGNNSGGGGYG. Low complexity-rich tracts occupy residues 33-44 and 56-73; these read NNNNNNRNSSNN and HHQQ…QQQQ. The region spanning 84-166 is the Sm domain; the sequence is RTVFMSMSLV…FLQITATGVV (83 aa). The stretch at 258-287 forms a coiled coil; that stretch reads EFYKINQSVAEKKAQEIENEKSGNIHLLEE. Disordered stretches follow at residues 305-474, 516-557, 615-763, 901-920, and 930-1103; these read VVRK…RESP, TNKS…APKS, LVIK…NNTT, HTMK…VQPQ, and QPQG…NQYH. The segment covering 312–356 has biased composition (low complexity); the sequence is PTSTTSTTTSPPTQNPTPSSSVYIPPSKRNNNNNTPSTPSVTSPP. Residues 358–371 are compositionally biased toward basic and acidic residues; it reads VDKKHQQTHQDKKQ. A coiled-coil region spans residues 366 to 403; that stretch reads HQDKKQTQQQQQQQQQQQQQQQQQQQQQQQQQQQQQTQ. The span at 372–463 shows a compositional bias: low complexity; sequence TQQQQQQQQQ…NNTPTATNTN (92 aa). Positions 516–529 are enriched in polar residues; that stretch reads TNKSMNKSGSNIST. Low complexity-rich tracts occupy residues 530–544, 637–676, and 683–694; these read TPVN…NGTP, PTQL…TPST, and TTTPITTTILTE. The stretch at 691 to 730 forms a coiled coil; it reads ILTENKSDDKEKEKEKEKEKVDEKEKEKEKEKSDEKDKDQ. The segment covering 695–741 has biased composition (basic and acidic residues); it reads NKSDDKEKEKEKEKEKVDEKEKEKEKEKSDEKDKDQSSTLVEKKDES. A compositionally biased stretch (low complexity) spans 742-763; sequence SSSSNTTTTTTNTTNNNNNNTT. The span at 930-957 shows a compositional bias: low complexity; that stretch reads QPQGGVVQPSAGGAPKTMYQQQQQQQQQ. The span at 960-969 shows a compositional bias: gly residues; the sequence is QPGGPMGVQR. A compositionally biased stretch (low complexity) spans 974–984; that stretch reads PPQQQPQQQQQ. Pro residues predominate over residues 1020-1031; it reads YAVPHPQYPMPP. The span at 1062–1076 shows a compositional bias: low complexity; sequence QVVSQNSPQQDSPSN.

This sequence belongs to the ataxin-2 family.

The sequence is that of Ataxin-2 homolog (atxn2) from Dictyostelium discoideum (Social amoeba).